A 460-amino-acid polypeptide reads, in one-letter code: Argininosuccinate lyase (460 aa).

This sequence belongs to the lyase 1 family. Argininosuccinate lyase subfamily.

The protein localises to the cytoplasm. It carries out the reaction 2-(N(omega)-L-arginino)succinate = fumarate + L-arginine. Its pathway is amino-acid biosynthesis; L-arginine biosynthesis; L-arginine from L-ornithine and carbamoyl phosphate: step 3/3. This chain is Argininosuccinate lyase, found in Staphylococcus haemolyticus (strain JCSC1435).